We begin with the raw amino-acid sequence, 140 residues long: LNSPNAVLQHMSIPQFLGKGTPVVFVRKSESDYGDVVRVMTGVYIKFFFKTSKLCVDETVWKVNDEELVVTGGNVGNENDIFKIKKTDLVIRGMKNVYKLLHCRSHLGCKNIGGNFKNGYPRLAAVDDDKDFIPFVFIKA.

A disulfide bridge links Cys103 with Cys109.

This sequence belongs to the protease inhibitor I3 (leguminous Kunitz-type inhibitor) family.

It is found in the vacuole. Inhibitor of cysteine proteases. May protect the plant by inhibiting proteases of invading organisms. This chain is Cysteine protease inhibitor 6, found in Solanum tuberosum (Potato).